A 650-amino-acid chain; its full sequence is MSSQSLYKVSGNIAANALVNNDQYKKMYQESIVNPEGFWREHGKRIDWIKPYTKIKKTTFDDHNLSINWFYDGTLNASANCLDRHLAEHSDRVAIIWEGDNASEQRQITYGELHTQVCKFANALRSQGVRRGDIVTIYMPMVPEAAVAMLACARIGAVHSVVFGGFSPDSIASRVIDGKSKVVITADEGMRGGRAIPLKRNIDDALKHPDVTSVEKVIVLKRTGGKVDWVEGRDVWWHSLVETASEHCAIEEMGAEDPLFLLYTSGSTGNPKGVLHTTGGYMVYASMTHEYVFDYKPGEIYWCTADVGWITGHSYMVYGPLANGATVLIHEGIPNYPSPARLGEMIDRHKVNILYTAPTLIRALMAEGKQHFDKYDGSSLRIMGSVGEPINPEAWRWYHEVIGHEHCPIVDTWWQTETGGILITPLPGATDTKPGSATRPFFGVQPALVDNMGNILEGATEGNLVLLDSWPGQMRTVYGDHERFVLTYFKTFRGMYFTGDGARRDEDGYYWITGRVDDVINVSGHRLGTAEVESALVSHELVAEAAVVGYPHDIKGQGIYAYVTLTRGTEESEELRQELRQWVRKEIGALATPDLIQWATGLPKTRSGKIMRRFLRKIAANEVTNLGDASTLADPAVIETLIETRLNRNE.

CoA-binding positions include Arg-191 to Arg-194, Thr-311, and Asn-335. Residues Gly-387 to Pro-389, Asp-411 to Thr-416, Asp-500, and Arg-515 each bind ATP. Ser-523 serves as a coordination point for CoA. An ATP-binding site is contributed by Arg-526. The Mg(2+) site is built by Val-537, His-539, and Val-542. Position 584 (Arg-584) interacts with CoA. At Lys-609 the chain carries N6-acetyllysine.

It belongs to the ATP-dependent AMP-binding enzyme family. It depends on Mg(2+) as a cofactor. Acetylated. Deacetylation by the SIR2-homolog deacetylase activates the enzyme.

The enzyme catalyses acetate + ATP + CoA = acetyl-CoA + AMP + diphosphate. Its function is as follows. Catalyzes the conversion of acetate into acetyl-CoA (AcCoA), an essential intermediate at the junction of anabolic and catabolic pathways. AcsA undergoes a two-step reaction. In the first half reaction, AcsA combines acetate with ATP to form acetyl-adenylate (AcAMP) intermediate. In the second half reaction, it can then transfer the acetyl group from AcAMP to the sulfhydryl group of CoA, forming the product AcCoA. The polypeptide is Acetyl-coenzyme A synthetase (Shewanella sp. (strain ANA-3)).